Consider the following 870-residue polypeptide: Valine--tRNA ligase (870 aa).

A compositionally biased stretch (polar residues) spans 1–13 (MTSQTFTTSSATP). The segment at 1–21 (MTSQTFTTSSATPPTRGVVPD) is disordered. Positions 63–73 (PTVSGHLHPGH) match the 'HIGH' region motif. The segment at 479–505 (YDHPLLPDESALPVDPASQPPSGYQES) is disordered. The 'KMSKS' region signature appears at 595–599 (KMSKS). Position 598 (K598) interacts with ATP.

Belongs to the class-I aminoacyl-tRNA synthetase family. ValS type 2 subfamily. As to quaternary structure, monomer.

The protein localises to the cytoplasm. The catalysed reaction is tRNA(Val) + L-valine + ATP = L-valyl-tRNA(Val) + AMP + diphosphate. In terms of biological role, catalyzes the attachment of valine to tRNA(Val). As ValRS can inadvertently accommodate and process structurally similar amino acids such as threonine, to avoid such errors, it has a 'posttransfer' editing activity that hydrolyzes mischarged Thr-tRNA(Val) in a tRNA-dependent manner. This Cutibacterium acnes (strain DSM 16379 / KPA171202) (Propionibacterium acnes) protein is Valine--tRNA ligase.